We begin with the raw amino-acid sequence, 601 residues long: Glutamine--fructose-6-phosphate aminotransferase [isomerizing] (601 aa).

Catalysis depends on Cys-2, which acts as the Nucleophile; for GATase activity. Residues Cys-2 to Asp-216 enclose the Glutamine amidotransferase type-2 domain. SIS domains follow at residues Ile-282 to Asp-421 and Ile-453 to Pro-591. Lys-596 functions as the For Fru-6P isomerization activity in the catalytic mechanism.

In terms of assembly, homodimer.

It is found in the cytoplasm. It carries out the reaction D-fructose 6-phosphate + L-glutamine = D-glucosamine 6-phosphate + L-glutamate. Functionally, catalyzes the first step in hexosamine metabolism, converting fructose-6P into glucosamine-6P using glutamine as a nitrogen source. This is Glutamine--fructose-6-phosphate aminotransferase [isomerizing] from Listeria monocytogenes serovar 1/2a (strain ATCC BAA-679 / EGD-e).